The primary structure comprises 473 residues: FAD-dependent urate hydroxylase (473 aa).

Belongs to the HpyO family. In terms of assembly, homodimer. Requires FAD as cofactor.

The catalysed reaction is urate + NADH + O2 + H(+) = 5-hydroxyisourate + NAD(+) + H2O. It catalyses the reaction urate + NADPH + O2 + H(+) = 5-hydroxyisourate + NADP(+) + H2O. It functions in the pathway purine metabolism; urate degradation. Its function is as follows. Catalyzes the hydroxylation of urate to 5-hydroxyisourate (HIU). Is likely to be involved in the urate degradation pathway to allantoin. Is slightly more efficient (about 2.6 times) with NADPH than NADH as the electron donor. In Xanthomonas campestris pv. campestris (strain ATCC 33913 / DSM 3586 / NCPPB 528 / LMG 568 / P 25), this protein is FAD-dependent urate hydroxylase.